The sequence spans 418 residues: Actin-like protein 7B (418 aa).

The segment at 1–42 (MATKNSPSPKPMGTAQGDPGEAGTLPAPEAAGIRDTGSTQLK) is disordered. The residue at position 8 (serine 8) is a Phosphoserine.

Belongs to the actin family. In terms of tissue distribution, testis specific.

The protein localises to the cytoplasm. Its subcellular location is the cytoskeleton. This chain is Actin-like protein 7B (Actl7b), found in Mus musculus (Mouse).